Consider the following 383-residue polypeptide: MGASQKNQELIGGLILFSAALLAIVVNNSPLASYYAMLETINVKLGIENLVIDKNLMHWINDGLMAIYFLYIGLEIKREIIVGTLSKLSNIITPAIAAFAGLAMPSLIYLSINHDIKVINGWAIPSATDIAFTLGILALLGTRVPAKLKLLVITIAIFDDIAAIAIIAIFYTKSLSLLSLSLGTLFILAMIICNRIFKINRSSVYVVLGFFAWFCTIKSGVHATLAGFTTALCIPFRENDKDSPANFMEDSLHPWIIYFILPVFAFANAGISFSGISFSILFEPITLGIIWGLFVGKQLGIFSILAVFKKLKWFKLGESFSNLQLYGISLLCGIGFTMSLFIGVLAFNDTHLLNAIKIGVVVGSVLSGFFGYIVLRFIVTNPS.

The next 11 membrane-spanning stretches (helical) occupy residues 10 to 30 (LIGGLILFSAALLAIVVNNSP), 56 to 76 (LMHWINDGLMAIYFLYIGLEI), 91 to 111 (IITPAIAAFAGLAMPSLIYLS), 121 to 141 (GWAIPSATDIAFTLGILALLG), 150 to 170 (LLVITIAIFDDIAAIAIIAIF), 174 to 194 (SLSLLSLSLGTLFILAMIICN), 206 to 226 (VVLGFFAWFCTIKSGVHATLA), 254 to 274 (PWIIYFILPVFAFANAGISFS), 289 to 308 (IIWGLFVGKQLGIFSILAVF), 327 to 347 (GISLLCGIGFTMSLFIGVLAF), and 355 to 375 (AIKIGVVVGSVLSGFFGYIVL).

This sequence belongs to the NhaA Na(+)/H(+) (TC 2.A.33) antiporter family.

It is found in the cell inner membrane. The catalysed reaction is Na(+)(in) + 2 H(+)(out) = Na(+)(out) + 2 H(+)(in). Na(+)/H(+) antiporter that extrudes sodium in exchange for external protons. The protein is Na(+)/H(+) antiporter NhaA of Francisella tularensis subsp. holarctica (strain FTNF002-00 / FTA).